The chain runs to 108 residues: Thiosulfate sulfurtransferase GlpE (108 aa).

Residues 17-105 (KDGSAALVDI…WARQYPQDVE (89 aa)) enclose the Rhodanese domain. Residue Cys65 is the Cysteine persulfide intermediate of the active site.

Belongs to the GlpE family.

It is found in the cytoplasm. The enzyme catalyses thiosulfate + hydrogen cyanide = thiocyanate + sulfite + 2 H(+). It catalyses the reaction thiosulfate + [thioredoxin]-dithiol = [thioredoxin]-disulfide + hydrogen sulfide + sulfite + 2 H(+). Its function is as follows. Transferase that catalyzes the transfer of sulfur from thiosulfate to thiophilic acceptors such as cyanide or dithiols. May function in a CysM-independent thiosulfate assimilation pathway by catalyzing the conversion of thiosulfate to sulfite, which can then be used for L-cysteine biosynthesis. This is Thiosulfate sulfurtransferase GlpE from Serratia proteamaculans (strain 568).